We begin with the raw amino-acid sequence, 1046 residues long: RIRYKGIVCDRCGVEVTSAKVRRERMGHIELAAPVSHIWYFKGIPSRMGLVLDMSPRSLEEVIYFASYVVTKPGDTSLTEKQLLSEREYRQLKAEYGNAFEAGMGAEAVQTLLSNVDLEEEVTELKAQLREATGQKRVRAVRRLDIIEAFVKSGNKPEWMVMDVIPIIPPDLRPMVQLEGGRFATSDLNDLYRRVINRNNRLKRLLELNAPGIIVQNEKRMLQEAADALVDNGRRGRPVTGPGNRPLKSLSHMLKGKQGRFRQDLLGKRVDYSGRSVIDVGPFLKMNQMGLPRPMAMELFRPFIMKELVKRDLAGNIRAAKRKIDRHDEDVMDVLEDVIKEHPVLLNRAPTLHRLGIQAFEPVLVSGKAMRLHPLVTEAYNADFDGDQMAIHVPLSDEAQAEARLLMLAAGHILAPKDGKPIVAPSQDMVIGNYYLTTEEAGREGEGMIFKDVNEVRTAYQNKYVHLHTRIGIQTASLSAEKPFTAEQRSRIMMTSVGKLFFNDILPADFPYLNEPTEANLHEIDNRFFLEPGEDIKARYAETPILPPFKKGYLSDIIAEVYKIYKVTETSLLLDRMKDLGYDESTKSGLTVGVADVTDLKEKPEIIEDAHKQVATVTKQFRRGLITDSERYERVIAIWNKAKDDITEKLIEHFEPDNNIFMMSDSGARGNISNFTQLAGMRGLMAAPNGRIMELPIIANFREGLSVLEMFFSTHGARKGMTDTALKTADSGYMTRRLVDVAQDVIIREDDCGSDRGLDVSAIMNGNEVIESLYERILGRYAQKSVFEPQTGDKLVGHNEMITEDIAKRIIEAGVTTVTIRSAFTCNTEHGVCVRCYGRNMATGDVVEVGEAVGTVAAQSIGEPGTQLTMRTFHTGGVAGNDITQGLPRVQEIFEARNPKGRAMITEVTGEVTTIEENPADRTKEVTIQGETDTRTYTLPMSSRMRVGEGDHIHRGETLNEGSADPKEIIQVRDTLATENYIVLEVQKVYRMQGVEISDKHIEVMARQMLRKVRVMDPGETDLLPGTLMDIAQFRDANEGTLLKGG.

Positions 383, 385, and 387 each coordinate Mg(2+). Zn(2+) contacts are provided by cysteine 752, cysteine 826, cysteine 833, and cysteine 836.

It belongs to the RNA polymerase beta' chain family. In terms of assembly, the RNAP catalytic core consists of 2 alpha, 1 beta, 1 beta' and 1 omega subunit. When a sigma factor is associated with the core the holoenzyme is formed, which can initiate transcription. The cofactor is Mg(2+). Zn(2+) is required as a cofactor.

The catalysed reaction is RNA(n) + a ribonucleoside 5'-triphosphate = RNA(n+1) + diphosphate. Functionally, DNA-dependent RNA polymerase catalyzes the transcription of DNA into RNA using the four ribonucleoside triphosphates as substrates. This chain is DNA-directed RNA polymerase subunit beta', found in Weissella hellenica.